Reading from the N-terminus, the 211-residue chain is Dual specificity protein phosphatase 26 (211 aa).

One can recognise a Tyrosine-protein phosphatase domain in the interval 60 to 207 (NHADEVWPGL…LLALDRRLRQ (148 aa)). Residue Cys152 is the Phosphocysteine intermediate of the active site.

Belongs to the protein-tyrosine phosphatase family. Non-receptor class dual specificity subfamily. In terms of assembly, interacts with HSF4.

The protein localises to the cytoplasm. It localises to the nucleus. It is found in the golgi apparatus. The enzyme catalyses O-phospho-L-tyrosyl-[protein] + H2O = L-tyrosyl-[protein] + phosphate. It carries out the reaction O-phospho-L-seryl-[protein] + H2O = L-seryl-[protein] + phosphate. It catalyses the reaction O-phospho-L-threonyl-[protein] + H2O = L-threonyl-[protein] + phosphate. In terms of biological role, inactivates MAPK1 and MAPK3 which leads to dephosphorylation of heat shock factor protein 4 and a reduction in its DNA-binding activity. This Pongo abelii (Sumatran orangutan) protein is Dual specificity protein phosphatase 26 (DUSP26).